Reading from the N-terminus, the 539-residue chain is Gamma-2-syntrophin (539 aa).

In terms of domain architecture, PDZ spans 73–156; the sequence is TVTLRRQPVG…DVTITVEYLR (84 aa). The PH domain occupies 296-421; that stretch reads QVVHMGWVNE…WEKAFQRATF (126 aa).

The protein belongs to the syntrophin family. In terms of assembly, interacts with the dystrophin protein DMD and related proteins DTNA and DTNB.

The protein localises to the cell membrane. It is found in the sarcolemma. The protein resides in the cytoplasm. Its subcellular location is the cytoskeleton. Functionally, adapter protein that binds to and probably organizes the subcellular localization of a variety of proteins. May link various receptors to the actin cytoskeleton and the dystrophin glycoprotein complex. This is Gamma-2-syntrophin (Sntg2) from Mus musculus (Mouse).